Here is a 31-residue protein sequence, read N- to C-terminus: DGKCAGQDKPCKNSCDCCGARGECVYTGYXP.

2 disulfides stabilise this stretch: cysteine 4–cysteine 18 and cysteine 11–cysteine 24.

In terms of tissue distribution, expressed by the venom gland.

It localises to the secreted. Functionally, blocks voltage-gated sodium channels (Nav). This chain is U8-ctenitoxin-Co1a, found in Ctenus ornatus (Brazilian spider).